An 88-amino-acid polypeptide reads, in one-letter code: Sapecin-B (88 aa).

The signal sequence occupies residues 1–24; the sequence is MKFLTSLLLLFVVVMVSAVNLSMA. The propeptide occupies 25-54; sequence KESANQLTERLQELDGAAIQEPAELNRHKR. 3 disulfide bridges follow: cysteine 57–cysteine 78, cysteine 64–cysteine 84, and cysteine 68–cysteine 86.

The protein belongs to the invertebrate defensin family. Type 1 subfamily. Hemocytes and fat body.

The protein resides in the secreted. Its function is as follows. Sapecins, which are potent bactericidal proteins, are produced in response to injury. Sapecin B is cytotoxic to Gram-positive bacteria. The sequence is that of Sapecin-B from Sarcophaga peregrina (Flesh fly).